The sequence spans 459 residues: Zinc finger chaperone zpr1 (459 aa).

2 consecutive C4-type zinc fingers follow at residues 38-70 (CMECGKNGTTKLLLTVIPYFREVVLMSFECPHC) and 259-291 (CPSCSHQCDTHMKLLDIPHFKEVIIMSTVCDRC).

Belongs to the ZPR1 family.

Its subcellular location is the cytoplasm. The protein resides in the nucleus. Its function is as follows. Acts as a protein folding chaperone for elongation factor 1-alpha. The chain is Zinc finger chaperone zpr1 from Schizosaccharomyces pombe (strain 972 / ATCC 24843) (Fission yeast).